A 920-amino-acid chain; its full sequence is MSASTNRRRLKDINTGAGENPSSGKKPLRSVTPLPISSKNSNPALQKSLSSKENPNPKLSHRSFGSTQKPVLRPVPRIDKSAVSGEGRVTRSTSSGLRGRSSSPSDLIRVFSDLRKRNESRVIGEKGESGQDKKSGLKSSGFKQGTSEIKVEPSSVCEKADEGSSCPVNSSKFEGSSVARNSISDPKAHALVGSGEKSTVALKSDSKIEKTGKGTSVALRRKSLDNVGKAMEMSKDIRGNEGSSNSTAKYPSKLHEKLAFLEGKVKKIASDIKKTKDMLDLNNPDSSKVIISDIHQKITGIEKSMSHVIDGPEKNKTTKAKSSVKGLNKEELEDRLLPHQRLLRSRTQSKTSSHVSKGHDSVESNKAVNAEEKPSAPVEENAIALEFLASLDKEKVTFMSDQNALENLEVQEMDTEEPSKENDVSKDVNLTSNLTEILRANEALEEIDDEENREEMELEEIDDGCMYQLNDIGSKTSTGGWFVSEGEAVILAHDDGSCSYYDVANSEFMVNECNSLSIWVRLYEVTGVFGFVHYVKSVYSPPDGISPNTWRDCWVVRAPGADGCSGRYVVAASAGNTLESGFCSWDFYTKDIKALHIEDGSSRVSRTALAPLPNNTSHGRNTPACAVVPETQQWWYRPCGPLIASTGSFQSIVKVFDIRDGEQIMKWGVQNPVSALDYSSPLQWRNRGKLVIAETEAISVWDVNSLHPEAQHTISSSGRKISAFHINNTDAEVGGGVRQRVSSLDAEGNDGVFCTSDSINILDFRNPSGIGAKIPKLGVNAQCVSSRGDSVFLGCTNQKSTVKKQMASSSQVQQFSIRKQRLVSTYSLPDSNSHPHHSAITQVWGNSNFVMATSGMGLFVFDTAKEETLQQQPLTSDYGSVQTVREIIGPNDMYCPSFDYSGCRVLLISRDRPALWRYLL.

Basic residues predominate over residues 1–10 (MSASTNRRRL). 2 disordered regions span residues 1 to 199 (MSAS…EKST) and 309 to 375 (IDGP…EKPS). Polar residues predominate over residues 35–54 (PISSKNSNPALQKSLSSKEN). Over residues 90–105 (TRSTSSGLRGRSSSPS) the composition is skewed to low complexity. Positions 112–135 (SDLRKRNESRVIGEKGESGQDKKS) are enriched in basic and acidic residues. 2 stretches are compositionally biased toward polar residues: residues 137-147 (LKSSGFKQGTS) and 166-184 (CPVN…NSIS). The span at 327-337 (LNKEELEDRLL) shows a compositional bias: basic and acidic residues. Residues 345–355 (SRTQSKTSSHV) are compositionally biased toward polar residues. Residues 357–374 (KGHDSVESNKAVNAEEKP) are compositionally biased toward basic and acidic residues. Positions 435-463 (TEILRANEALEEIDDEENREEMELEEIDD) form a coiled coil.

As to quaternary structure, interacts with KIN14B, CDKA-1, CKS1 and CKS2.

It localises to the cytoplasm. In terms of biological role, might be involved in division plane determination. The chain is KIN14B-interacting protein At4g14310 from Arabidopsis thaliana (Mouse-ear cress).